The sequence spans 317 residues: MPDSRPDTELSNPQSTKPPLDPHLKALENESIHIFREVAAEFERPVMLYSIGKDSSVLLHLARKAFYPGRVPFPLLHVNTGWKFAEMITFRDEIVKRYDLDLIEHINPRGKAENITPFTHGSARYTDIMKTEALRQALDAGQFDAAFGGARRDEEASRAKERIYSFRTPDHRWDPRNQRPELWNVYNGQIRKGESVRVFPLSNWTEVDIWRYIQAEDIPIVPLYFAEKRPVVERDGMMIMAADPRLELLPGEVKREEVIRFRTLGCFPLTGAIRSTATTLEDVIAELEIATVSERQGRAIDRDQSGSMEKKKREGYF.

Disordered regions lie at residues 1–22 and 298–317; these read MPDS…PLDP and RAID…EGYF.

The protein belongs to the PAPS reductase family. CysD subfamily. As to quaternary structure, heterodimer composed of CysD, the smaller subunit, and CysN.

The catalysed reaction is sulfate + ATP + H(+) = adenosine 5'-phosphosulfate + diphosphate. Its pathway is sulfur metabolism; hydrogen sulfide biosynthesis; sulfite from sulfate: step 1/3. Functionally, with CysN forms the ATP sulfurylase (ATPS) that catalyzes the adenylation of sulfate producing adenosine 5'-phosphosulfate (APS) and diphosphate, the first enzymatic step in sulfur assimilation pathway. APS synthesis involves the formation of a high-energy phosphoric-sulfuric acid anhydride bond driven by GTP hydrolysis by CysN coupled to ATP hydrolysis by CysD. The protein is Sulfate adenylyltransferase subunit 2 (cysD) of Rhizobium tropici.